A 131-amino-acid chain; its full sequence is DNA-directed RNA polymerases I, II, and III subunit RPABC2 (131 aa).

Positions 1-24 (MDDADYDNDDVGGDDFDDVDEDVD) are disordered.

Belongs to the archaeal Rpo6/eukaryotic RPB6 RNA polymerase subunit family. As to quaternary structure, component of the RNA polymerase I (Pol I), RNA polymerase II (Pol II) and RNA polymerase III (Pol III) complexes consisting of at least 13, 12 and 17 subunits, respectively.

It localises to the nucleus. Its function is as follows. DNA-dependent RNA polymerases catalyze the transcription of DNA into RNA using the four ribonucleoside triphosphates as substrates. Common component of RNA polymerases I, II and III which synthesize ribosomal RNA precursors, mRNA precursors and many functional non-coding RNAs, and small RNAs, such as 5S rRNA and tRNAs, respectively. Pol II is the central component of the basal RNA polymerase II transcription machinery. Pols are composed of mobile elements that move relative to each other. In Pol II, Polr2F/RPB6 is part of the clamp element and together with parts of Polr2A/RPB1 and RPB2 forms a pocket to which the Polr2D/RPB4-Polr2G/RPB7 subcomplex binds. This is DNA-directed RNA polymerases I, II, and III subunit RPABC2 from Drosophila melanogaster (Fruit fly).